Consider the following 260-residue polypeptide: Arginine esterase (260 aa).

Positions 1–17 are cleaved as a signal peptide; sequence MWFLALCLAMSLGWTGA. A propeptide spans 18–24 (activation peptide); sequence EPHFQPR. Positions 25 to 257 constitute a Peptidase S1 domain; it reads IIGGRECLKN…HLMWIKDTMK (233 aa). Disulfide bonds link C31-C172, C50-C66, C151-C218, C183-C197, and C208-C233. The Charge relay system role is filled by H65. N79 carries an N-linked (GlcNAc...) asparagine glycan. The active-site Charge relay system is D119. The active-site Charge relay system is S212.

Belongs to the peptidase S1 family. Kallikrein subfamily.

The catalysed reaction is Preferential cleavage of Arg-|-Xaa bonds in small molecule substrates. Highly selective action to release kallidin (lysyl-bradykinin) from kininogen involves hydrolysis of Met-|-Xaa or Leu-|-Xaa.. Its function is as follows. This serine protease is found in dog seminal plasma, its exact physiological function is not known. In Canis lupus familiaris (Dog), this protein is Arginine esterase.